Reading from the N-terminus, the 188-residue chain is GTPase KRas (188 aa).

GTP is bound by residues G10–A18, V29–T35, A59–G60, and N116–D119. The Effector region motif lies at Y32–Y40. The segment at K167–M188 is disordered. Cysteine methyl ester is present on C185. Residue C185 is the site of S-farnesyl cysteine attachment. Positions I186 to M188 are cleaved as a propeptide — removed in mature form.

It belongs to the small GTPase superfamily. Ras family.

It is found in the cell membrane. The protein localises to the cytoplasm. The enzyme catalyses GTP + H2O = GDP + phosphate + H(+). Its activity is regulated as follows. Alternates between an inactive form bound to GDP and an active form bound to GTP. Activated by a guanine nucleotide-exchange factor (GEF) and inactivated by a GTPase-activating protein (GAP). Its function is as follows. Ras proteins bind GDP/GTP and possess intrinsic GTPase activity. Plays an important role in the regulation of cell proliferation. The chain is GTPase KRas (kras1) from Oryzias latipes (Japanese rice fish).